The following is a 465-amino-acid chain: Cytochrome c peroxidase Ccp (465 aa).

The Cytoplasmic segment spans residues 1–6 (MKMVSR). A helical membrane pass occupies residues 7 to 27 (ITAIGLAGVAICYLGLSGYVW). Over 28–465 (YHDNKRSKQA…VYTPYMQDKQ (438 aa)) the chain is Periplasmic. Cytochrome c domains are found at residues 42–155 (SAVS…AKQR), 185–287 (QKVA…EKDP), and 337–454 (AQQK…HSLN). Heme c contacts are provided by Cys-59, Cys-62, His-63, Met-125, Cys-207, Cys-210, His-211, Cys-351, Cys-354, His-355, and Met-429.

In terms of assembly, the recombinant enzyme lacking its transmembrane domain is a monomer in solution. The cofactor is heme c.

The protein localises to the cell inner membrane. Its activity is regulated as follows. Does not require reductive activation for maximum activity, as peroxidatic heme is high-spin His/OH(-) 6-coordinated. Calcium ions are needed to attain maximum peroxidase activity. Functionally, cytochrome peroxidase that enables anaerobic respiration with H(2)O(2) as a terminal electron acceptor. It receives electrons from the quinol pool. Menaquinol is probably the electron donor in vivo. It can use menadiol (a menaquinol analog), hydroquinone, duroquinol and the artificial electron donor ABTS(2-) in vitro, but only menadiol and hydroquinone can efficiently transfer electrons to Ccp, maintaining the catalytic activity of the enzyme. It enables E.coli to grow on a nonfermentable carbon source when H(2)O(2) is supplied. Plays a role in the peroxide stress response under anaerobic conditions. However, it does not degrade H(2)O(2) quickly enough to lower the periplasmic H(2)O(2) level below that of the surrounding medium and protect the cell from its toxic effects. This is Cytochrome c peroxidase Ccp from Escherichia coli (strain K12).